Here is a 129-residue protein sequence, read N- to C-terminus: ATP synthase epsilon chain (129 aa).

Belongs to the ATPase epsilon chain family. In terms of assembly, F-type ATPases have 2 components, CF(1) - the catalytic core - and CF(0) - the membrane proton channel. CF(1) has five subunits: alpha(3), beta(3), gamma(1), delta(1), epsilon(1). CF(0) has three main subunits: a, b and c.

It is found in the cell inner membrane. Produces ATP from ADP in the presence of a proton gradient across the membrane. In Campylobacter jejuni subsp. jejuni serotype O:6 (strain 81116 / NCTC 11828), this protein is ATP synthase epsilon chain.